The chain runs to 254 residues: 4-hydroxy-tetrahydrodipicolinate reductase (254 aa).

Residues 8–13, aspartate 35, 86–88, and 110–113 contribute to the NAD(+) site; these read GCSGKM, CST, and SANM. The active-site Proton donor/acceptor is the histidine 143. Histidine 144 is a (S)-2,3,4,5-tetrahydrodipicolinate binding site. Catalysis depends on lysine 147, which acts as the Proton donor. 153 to 154 serves as a coordination point for (S)-2,3,4,5-tetrahydrodipicolinate; it reads GT.

Belongs to the DapB family.

It is found in the cytoplasm. It catalyses the reaction (S)-2,3,4,5-tetrahydrodipicolinate + NAD(+) + H2O = (2S,4S)-4-hydroxy-2,3,4,5-tetrahydrodipicolinate + NADH + H(+). The catalysed reaction is (S)-2,3,4,5-tetrahydrodipicolinate + NADP(+) + H2O = (2S,4S)-4-hydroxy-2,3,4,5-tetrahydrodipicolinate + NADPH + H(+). It participates in amino-acid biosynthesis; L-lysine biosynthesis via DAP pathway; (S)-tetrahydrodipicolinate from L-aspartate: step 4/4. Catalyzes the conversion of 4-hydroxy-tetrahydrodipicolinate (HTPA) to tetrahydrodipicolinate. This chain is 4-hydroxy-tetrahydrodipicolinate reductase, found in Clostridium perfringens (strain ATCC 13124 / DSM 756 / JCM 1290 / NCIMB 6125 / NCTC 8237 / Type A).